A 334-amino-acid chain; its full sequence is Beta-ketoacyl-[acyl-carrier-protein] synthase III (334 aa).

Residues Cys-114 and His-253 contribute to the active site. Residues 254–258 (QANIR) are ACP-binding. Asn-283 is an active-site residue.

This sequence belongs to the thiolase-like superfamily. FabH family. Homodimer.

The protein resides in the cytoplasm. It catalyses the reaction malonyl-[ACP] + acetyl-CoA + H(+) = 3-oxobutanoyl-[ACP] + CO2 + CoA. It functions in the pathway lipid metabolism; fatty acid biosynthesis. In terms of biological role, catalyzes the condensation reaction of fatty acid synthesis by the addition to an acyl acceptor of two carbons from malonyl-ACP. Catalyzes the first condensation reaction which initiates fatty acid synthesis and may therefore play a role in governing the total rate of fatty acid production. Possesses both acetoacetyl-ACP synthase and acetyl transacylase activities. Its substrate specificity determines the biosynthesis of branched-chain and/or straight-chain of fatty acids. In Campylobacter curvus (strain 525.92), this protein is Beta-ketoacyl-[acyl-carrier-protein] synthase III.